Reading from the N-terminus, the 378-residue chain is MHNLYSITGYPDPPGTMEEEEEDDDYENSTPPYKDLPPKPGTMEEEEEDDDYENSTPPYKDLPPKPGTMEEEEEDDDYENSTPPYKDLPPKPGSSAPPRPPRAAKETEKPPLPCKPRNMTGLDLAAVTCPPPQLAVNLEPSPLQPSLAATPVPWLNQRSGGPGCCQKRWMVYLCLLVVTSLFLGCLGLTVTLIKYQELMEELRMLSFQQMTWRTNMTGMAGLAGLKHDIARVRADTNQSLVELWGLLDCRRITCPEGWLPFEGKCYYFSPSTKSWDEARMFCQENYSHLVIINSFAEHNFVAKAHGSPRVYWLGLNDRAQEGDWRWLDGSPVTLSFWEPEEPNNIHDEDCATMNKGGTWNDLSCYKTTYWICERKCSC.

The disordered stretch occupies residues 1-119; that stretch reads MHNLYSITGY…PPLPCKPRNM (119 aa). At 1–172 the chain is on the cytoplasmic side; it reads MHNLYSITGY…GCCQKRWMVY (172 aa). Composition is skewed to acidic residues over residues 17-27, 43-53, and 69-79; these read MEEEEEDDDYE. Positions 86 to 101 are enriched in pro residues; it reads KDLPPKPGSSAPPRPP. Residues 173 to 193 traverse the membrane as a helical; Signal-anchor for type II membrane protein segment; sequence LCLLVVTSLFLGCLGLTVTLI. Residues 194 to 378 are Extracellular-facing; the sequence is KYQELMEELR…YWICERKCSC (185 aa). N215 and N237 each carry an N-linked (GlcNAc...) asparagine glycan. Disulfide bonds link C254-C265, C282-C372, and C350-C364. The 113-residue stretch at 261–373 folds into the C-type lectin domain; that stretch reads FEGKCYYFSP…CYKTTYWICE (113 aa). N285 carries N-linked (GlcNAc...) asparagine glycosylation. Residues E341, N343, E348, N360, and D361 each contribute to the Ca(2+) site.

Oligomer; disulfide-linked. In terms of processing, phosphorylated on tyrosine residues. Expressed on dividing B-cells of germinal centers in various tissues, including lymph nodes, tonsils, stomach, intestine, appendix and spleen.

It is found in the membrane. Its function is as follows. Cell surface receptor which may be involved in carbohydrate-mediated communication between cells in the germinal center. Binds glycans with terminal alpha-linked mannose or fucose residues. The chain is C-type lectin domain family 17, member A (CLEC17A) from Homo sapiens (Human).